The chain runs to 515 residues: Carboxyl-terminal-processing peptidase 2, chloroplastic (515 aa).

A PDZ domain is found at 198-286; the sequence is FKSLRSGTQG…SAVELAIRSG (89 aa). Residues serine 417 and lysine 442 each act as charge relay system in the active site.

It belongs to the peptidase S41A family.

The protein resides in the plastid. It is found in the chloroplast thylakoid lumen. The catalysed reaction is The enzyme shows specific recognition of a C-terminal tripeptide, Xaa-Yaa-Zaa, in which Xaa is preferably Ala or Leu, Yaa is preferably Ala or Tyr, and Zaa is preferably Ala, but then cleaves at a variable distance from the C-terminus. A typical cleavage is -Ala-Ala-|-Arg-Ala-Ala-Lys-Glu-Asn-Tyr-Ala-Leu-Ala-Ala.. Its function is as follows. Protease involved in the C-terminal processing of the chloroplastic D1 protein of photosystem II. This proteolytic processing is necessary to allow the light-driven assembly of the tetranuclear manganese cluster, which is responsible for photosynthetic water oxidation. In Arabidopsis thaliana (Mouse-ear cress), this protein is Carboxyl-terminal-processing peptidase 2, chloroplastic (CTPA2).